We begin with the raw amino-acid sequence, 259 residues long: MGKYNLTALRVRQTALSQKAAGKIKRLPQWVDVIGDIPPAQVLVRNQPQQHQLVRQRVKTLPGASKPQVVFETEEKRVKPKKASRMFQPVQIKFEEDQLRKEFFRDHPWELARPRVLVETSGKDYERYDWSRLQQPGKRLDGESVVQRQLWLLNNVPDMTKSAAYDIARREFYRLRLQEDIERRVAAEEAEATGATFGPTRLEIGMELENQEYERWKQWAKMEAQIQEQRAASFTGSALPSSEESAPVDEETEKVPQQV.

The segment covering 230-244 has biased composition (polar residues); it reads RAASFTGSALPSSEE. Positions 230–259 are disordered; the sequence is RAASFTGSALPSSEESAPVDEETEKVPQQV.

It belongs to the mitochondrion-specific ribosomal protein mS23 family. In terms of assembly, component of the mitochondrial small ribosomal subunit.

It is found in the mitochondrion. This Aspergillus terreus (strain NIH 2624 / FGSC A1156) protein is Small ribosomal subunit protein mS23 (rsm25).